We begin with the raw amino-acid sequence, 444 residues long: Phosphoglucosamine mutase (444 aa).

Ser-103 (phosphoserine intermediate) is an active-site residue. Residues Ser-103, Asp-242, Asp-244, and Asp-246 each contribute to the Mg(2+) site. A Phosphoserine modification is found at Ser-103.

The protein belongs to the phosphohexose mutase family. Mg(2+) is required as a cofactor. Activated by phosphorylation.

The enzyme catalyses alpha-D-glucosamine 1-phosphate = D-glucosamine 6-phosphate. Functionally, catalyzes the conversion of glucosamine-6-phosphate to glucosamine-1-phosphate. The protein is Phosphoglucosamine mutase of Hydrogenovibrio crunogenus (strain DSM 25203 / XCL-2) (Thiomicrospira crunogena).